Reading from the N-terminus, the 657-residue chain is Probable cytochrome P450 556A1 (657 aa).

The chain crosses the membrane as a helical span at residues 2–24 (FLTSILYTIIIILIFYKGLEYLI). Positions 440–486 (RSLPSINNNNNNNNNNNNNNNNNNNNNNNNNSNNNSINGNNKNNNRN) are disordered. The segment covering 446–486 (NNNNNNNNNNNNNNNNNNNNNNNNNSNNNSINGNNKNNNRN) has biased composition (low complexity). Heme is bound at residue cysteine 587.

Belongs to the cytochrome P450 family. The cofactor is heme.

Its subcellular location is the membrane. In Dictyostelium discoideum (Social amoeba), this protein is Probable cytochrome P450 556A1 (cyp556A1).